Here is a 193-residue protein sequence, read N- to C-terminus: T-cell receptor-associated transmembrane adapter 1 (193 aa).

The Extracellular segment spans residues 1–10 (MSGNAECHFS). Residues 11-31 (IWAILAFLGLALTISLIFNIF) form a helical; Signal-anchor for type III membrane protein membrane-spanning segment. The Cytoplasmic portion of the chain corresponds to 32–193 (HCVEKQRQEK…LHSLDYDLAQ (162 aa)). At serine 46 the chain carries Phosphoserine. Tyrosine 80 bears the Phosphotyrosine mark. The interaction with PIK3R1 stretch occupies residues 80 to 83 (YEQM). The disordered stretch occupies residues 116-166 (NEGKRRKPRKQKSHLSDKDEEGQMHAKDISLSKTTLVDSYPPESEAIEENI). The span at 119-128 (KRRKPRKQKS) shows a compositional bias: basic residues. A compositionally biased stretch (basic and acidic residues) spans 129-145 (HLSDKDEEGQMHAKDIS).

As to quaternary structure, homodimer; disulfide-linked. Interacts with CD3Z. When phosphorylated, interacts with PIK3R1. In terms of processing, phosphorylated on tyrosines upon TCR activation.

The protein localises to the cell membrane. Stabilizes the TCR (T-cell antigen receptor)/CD3 complex at the surface of T-cells. The protein is T-cell receptor-associated transmembrane adapter 1 (TRAT1) of Bos taurus (Bovine).